Reading from the N-terminus, the 431-residue chain is Argininosuccinate lyase (431 aa).

It belongs to the lyase 1 family. Argininosuccinate lyase subfamily.

The protein localises to the cytoplasm. The catalysed reaction is 2-(N(omega)-L-arginino)succinate = fumarate + L-arginine. It participates in amino-acid biosynthesis; L-arginine biosynthesis; L-arginine from L-ornithine and carbamoyl phosphate: step 3/3. This is Argininosuccinate lyase from Xanthomonas campestris pv. campestris (strain B100).